The primary structure comprises 251 residues: MQIDFNSDMGESFGAWTIGDGVDTELMAFISSANIATGFHAGDPSTMRRTIEQAKRLGVAIGAHPGFRDLVGFGRRHINAPAQELVDDMLYQLGALRELARVQGVPLQHFKPHGALYMHLARDEEAARLLVENLQRLEPDLLLYCMPGSVICNVAQELGQPVVREFYADRAYDLSGSIVFTRNVRAHDPAEVAARVIRACQQGLVRTVEGDDLAIQFDSICLHSDTPGALALAQATRQALDGAGIEVRTPR.

It belongs to the LamB/PxpA family. As to quaternary structure, forms a complex composed of PxpA, PxpB and PxpC.

The enzyme catalyses 5-oxo-L-proline + ATP + 2 H2O = L-glutamate + ADP + phosphate + H(+). In terms of biological role, catalyzes the cleavage of 5-oxoproline to form L-glutamate coupled to the hydrolysis of ATP to ADP and inorganic phosphate. This is 5-oxoprolinase subunit A 2 from Pseudomonas syringae pv. tomato (strain ATCC BAA-871 / DC3000).